The primary structure comprises 337 residues: Tetraacyldisaccharide 4'-kinase (337 aa).

Residue 55 to 62 coordinates ATP; that stretch reads NAGGTGKT.

Belongs to the LpxK family.

The enzyme catalyses a lipid A disaccharide + ATP = a lipid IVA + ADP + H(+). It functions in the pathway glycolipid biosynthesis; lipid IV(A) biosynthesis; lipid IV(A) from (3R)-3-hydroxytetradecanoyl-[acyl-carrier-protein] and UDP-N-acetyl-alpha-D-glucosamine: step 6/6. Functionally, transfers the gamma-phosphate of ATP to the 4'-position of a tetraacyldisaccharide 1-phosphate intermediate (termed DS-1-P) to form tetraacyldisaccharide 1,4'-bis-phosphate (lipid IVA). This chain is Tetraacyldisaccharide 4'-kinase, found in Dinoroseobacter shibae (strain DSM 16493 / NCIMB 14021 / DFL 12).